We begin with the raw amino-acid sequence, 136 residues long: HTH-type transcriptional regulator CysB (136 aa).

An HTH lysR-type domain is found at 1-59 (MDVRQLRSLVTLVEVRFSVSRAAECLHLVQSAVTQHLKQLEAELGTRLFVRHGKRLVGL). The H-T-H motif DNA-binding region spans 19-38 (VSRAAECLHLVQSAVTQHLK).

This sequence belongs to the LysR transcriptional regulatory family.

Functionally, this protein is a positive regulator of gene expression for the cysteine regulon. This chain is HTH-type transcriptional regulator CysB (cysB), found in Thiocapsa roseopersicina.